Here is a 116-residue protein sequence, read N- to C-terminus: Helper of Tim protein 13 (116 aa).

Residues 10-94 (TVDDQSRCVH…SNLICPNCRS (85 aa)) form a CHY-type; degenerate zinc finger. Cys17, His19, Cys40, Cys43, Cys68, Cys71, Cys89, and Cys92 together coordinate Zn(2+).

Interacts with the small Tim proteins TIM8, TIM9, TIM10, TIM12, and TIM13.

It localises to the mitochondrion intermembrane space. It is found in the mitochondrion membrane. Functionally, required for the assembly or recycling of the small Tim proteins in the mitochondrial intermembrane, thereby participating in the import and insertion of multi-pass transmembrane proteins into the mitochondrial inner membrane. Probably acts by facilitating the formation of disulfide bonds in small Tim proteins. The chain is Helper of Tim protein 13 (HOT13) from Saccharomyces cerevisiae (strain ATCC 204508 / S288c) (Baker's yeast).